The chain runs to 346 residues: Farnesyl diphosphate synthase 1 (346 aa).

Residues Lys52, Arg55, and Gln90 each coordinate isopentenyl diphosphate. The Mg(2+) site is built by Asp97 and Asp101. The DDXXD motif signature appears at 97–101 (DDIMD). Arg106 lines the dimethylallyl diphosphate pocket. Arg107 lines the isopentenyl diphosphate pocket. Lys194, Thr195, and Gln233 together coordinate dimethylallyl diphosphate. A DDXXD motif motif is present at residues 236–240 (DDYLD). Residues Lys250 and Lys259 each coordinate dimethylallyl diphosphate.

Belongs to the FPP/GGPP synthase family. Requires Mg(2+) as cofactor. Mn(2+) serves as cofactor. In terms of tissue distribution, highly expressed in shoots.

The enzyme catalyses isopentenyl diphosphate + (2E)-geranyl diphosphate = (2E,6E)-farnesyl diphosphate + diphosphate. It carries out the reaction isopentenyl diphosphate + dimethylallyl diphosphate = (2E)-geranyl diphosphate + diphosphate. It functions in the pathway isoprenoid biosynthesis; farnesyl diphosphate biosynthesis; farnesyl diphosphate from geranyl diphosphate and isopentenyl diphosphate: step 1/1. Its pathway is isoprenoid biosynthesis; geranyl diphosphate biosynthesis; geranyl diphosphate from dimethylallyl diphosphate and isopentenyl diphosphate: step 1/1. Its function is as follows. Catalyzes the sequential condensation of isopentenyl pyrophosphate (IPP) with the allylic pyrophosphates, dimethylallyl pyrophosphate (DMAPP), and then with the resultant geranylpyrophosphate (GPP) to the ultimate product farnesyl pyrophosphate (FPP). Has a 4.5 time greater affinity for GPP versus DMAPP. The sequence is that of Farnesyl diphosphate synthase 1 (FDS-1) from Artemisia spiciformis (Spiked big sagebrush).